The following is a 369-amino-acid chain: Transposase for insertion sequence element IS1201 (369 aa).

The protein belongs to the transposase mutator family.

Functionally, required for the transposition of the insertion element. This Lactobacillus helveticus (Lactobacillus suntoryeus) protein is Transposase for insertion sequence element IS1201.